The sequence spans 192 residues: ER membrane protein complex subunit 8/9 homolog (192 aa).

The 131-residue stretch at 5–135 (ISITTEALSK…LVSIDKVGSD (131 aa)) folds into the MPN domain.

The protein belongs to the EMC8/EMC9 family.

The sequence is that of ER membrane protein complex subunit 8/9 homolog from Dictyostelium discoideum (Social amoeba).